A 278-amino-acid polypeptide reads, in one-letter code: Sulfur carrier protein FdhD (278 aa).

C121 serves as the catalytic Cysteine persulfide intermediate. Residue 260 to 265 (FCKPGR) participates in Mo-bis(molybdopterin guanine dinucleotide) binding.

This sequence belongs to the FdhD family.

Its subcellular location is the cytoplasm. Functionally, required for formate dehydrogenase (FDH) activity. Acts as a sulfur carrier protein that transfers sulfur from IscS to the molybdenum cofactor prior to its insertion into FDH. In Escherichia coli O127:H6 (strain E2348/69 / EPEC), this protein is Sulfur carrier protein FdhD.